The primary structure comprises 179 residues: Interleukin-22 (179 aa).

The N-terminal stretch at 1 to 33 (MAALQKSVSSFLMGTLATSCLLLLALLVQGGAA) is a signal peptide. Cystine bridges form between cysteine 40–cysteine 132 and cysteine 89–cysteine 178. 3 N-linked (GlcNAc...) asparagine glycosylation sites follow: asparagine 54, asparagine 68, and asparagine 97.

This sequence belongs to the IL-10 family.

It localises to the secreted. In terms of biological role, cytokine that plays a critical role in modulating tissue responses during inflammation. Plays an essential role in the regeneration of epithelial cells to maintain barrier function after injury and for the prevention of further tissue damage. Unlike most of the cytokines, has no effect on immune cells. Signals through a heterodimeric receptor composed of two subunits, the specific receptor IL22RA1 which is present on non-immune cells in many organs and the shared subunit IL10RB. Ligation of IL22RA1 with IL22 induces activation of the tyrosine kinases JAK1 and TYK2, which in turn activates STAT3. In turn, promotes cell survival and proliferation through STAT3, ERK1/2 and PI3K/AKT pathways. Promotes phosphorylation of GSK3B at 'Ser-9' and CTTN. Promotes epithelial cell spreading. The chain is Interleukin-22 (IL22) from Homo sapiens (Human).